The following is a 158-amino-acid chain: 18.2 kDa class I heat shock protein (158 aa).

The sHSP domain maps to glutamate 44–glycine 158.

This sequence belongs to the small heat shock protein (HSP20) family. As to quaternary structure, forms oligomeric structures.

It is found in the cytoplasm. This Medicago sativa (Alfalfa) protein is 18.2 kDa class I heat shock protein (HSP18.2).